Here is a 306-residue protein sequence, read N- to C-terminus: Arginase (306 aa).

Positions 96, 123, 125, and 127 each coordinate Mn(2+). Substrate is bound by residues 125 to 129 (HTDFH), 136 to 138 (SGN), and aspartate 178. Mn(2+) contacts are provided by aspartate 226 and aspartate 228. Threonine 240 and glutamate 271 together coordinate substrate.

The protein belongs to the arginase family. The cofactor is Mn(2+).

The catalysed reaction is L-arginine + H2O = urea + L-ornithine. The protein operates within nitrogen metabolism; urea cycle; L-ornithine and urea from L-arginine: step 1/1. In Brucella abortus biovar 1 (strain 9-941), this protein is Arginase (arcB).